The chain runs to 184 residues: uncharacterized protein (184 aa).

The N-terminal stretch at 1-20 (MTLRKILALTCLLLPMMASA) is a signal peptide.

The protein to H.influenzae HI_0045.

The protein localises to the periplasm. This is an uncharacterized protein from Escherichia coli (strain K12).